A 346-amino-acid polypeptide reads, in one-letter code: fMet-Leu-Phe receptor (346 aa).

Residues Asn1 and Asn7 are each glycosylated (N-linked (GlcNAc...) asparagine). Residues 1 to 24 (NSSLPTNISGGTPAVSAGYLFLDI) are Extracellular-facing. Residues 25–47 (VTYLVFAVTFVLGVLGNGLVIWV) traverse the membrane as a helical segment. Over 48–58 (AGFRMTHTVTT) the chain is Cytoplasmic. A helical membrane pass occupies residues 59 to 80 (ISYLNLAVADFCFTSTLPFFMV). At 81-97 (KKAMGGHWPFGWFLCKF) the chain is on the extracellular side. Cys95 and Cys173 are joined by a disulfide. Residues 98–118 (IFTIVDINLFGSVFLIALIAL) form a helical membrane-spanning segment. Residues 119-137 (DRCVCVLHPVWTQNHRTVS) are Cytoplasmic-facing. A helical transmembrane segment spans residues 138–159 (LAKKVIIGPWVMALLLTLPVII). Residues 160 to 202 (RVTTVPGKMGTVACTFNFSPWTNDPKERIKVAVAMLTVRGIIR) are Extracellular-facing. A helical transmembrane segment spans residues 203 to 223 (FIIGFSAPMSIVAVSYGLIAT). Over 224 to 239 (KIDKQGLIKSSRTLRV) the chain is Cytoplasmic. Residues 240-263 (LSFVAAAFFLSWSPYQVVALIATV) form a helical membrane-spanning segment. Topologically, residues 264–282 (RIRELLQGMYKEIGIAVDV) are extracellular. A helical transmembrane segment spans residues 283-302 (TSALAFFNSCLNPMLYVFMG). The Cytoplasmic portion of the chain corresponds to 303-346 (QDFRERLIHALPASLERALTEDSTQTSDTATNSTLPSAEVALQA). A disordered region spans residues 322-346 (TEDSTQTSDTATNSTLPSAEVALQA). A compositionally biased stretch (polar residues) spans 323–338 (EDSTQTSDTATNSTLP).

Belongs to the G-protein coupled receptor 1 family. Post-translationally, phosphorylated; which is necessary for desensitization.

The protein localises to the cell membrane. In terms of biological role, high affinity receptor for N-formyl-methionyl peptides (fMLP), which are powerful neutrophil chemotactic factors. Binding of fMLP to the receptor stimulates intracellular calcium mobilization and superoxide anion release. This response is mediated via a G-protein that activates a phosphatidylinositol-calcium second messenger system. Receptor for TAFA4, mediates its effects on chemoattracting macrophages, promoting phagocytosis and increasing ROS release. Receptor for cathepsin CTSG, leading to increased phagocyte chemotaxis. The polypeptide is fMet-Leu-Phe receptor (FPR1) (Gorilla gorilla gorilla (Western lowland gorilla)).